A 268-amino-acid chain; its full sequence is Ribosomal RNA small subunit methyltransferase A (268 aa).

Residues Asn17, Leu19, Gly44, Glu65, Asp89, and Asn110 each coordinate S-adenosyl-L-methionine.

It belongs to the class I-like SAM-binding methyltransferase superfamily. rRNA adenine N(6)-methyltransferase family. RsmA subfamily.

The protein localises to the cytoplasm. It catalyses the reaction adenosine(1518)/adenosine(1519) in 16S rRNA + 4 S-adenosyl-L-methionine = N(6)-dimethyladenosine(1518)/N(6)-dimethyladenosine(1519) in 16S rRNA + 4 S-adenosyl-L-homocysteine + 4 H(+). In terms of biological role, specifically dimethylates two adjacent adenosines (A1518 and A1519) in the loop of a conserved hairpin near the 3'-end of 16S rRNA in the 30S particle. May play a critical role in biogenesis of 30S subunits. This chain is Ribosomal RNA small subunit methyltransferase A, found in Acidithiobacillus ferrooxidans (strain ATCC 53993 / BNL-5-31) (Leptospirillum ferrooxidans (ATCC 53993)).